Reading from the N-terminus, the 398-residue chain is ATP-dependent RNA helicase eIF4A (398 aa).

A Q motif motif is present at residues 25–53; sequence DSFDAMNLRAELLRGVYAYGFERPSAIQQ. The Helicase ATP-binding domain maps to 56-226; it reads IMPVIKGSDV…TKFMRDPVRI (171 aa). 69–76 is a binding site for ATP; that stretch reads AQSGTGKT. Positions 174–177 match the DEAD box motif; it reads DEAD. In terms of domain architecture, Helicase C-terminal spans 237 to 398; sequence GIKQFYIAVE…EMPMNVADLI (162 aa).

This sequence belongs to the DEAD box helicase family. eIF4A subfamily. In terms of assembly, component of the eIF4F complex, which composition varies with external and internal environmental conditions. It is composed of at least eIF4A, eIF4E and eIF4G.

The protein resides in the cytoplasm. The catalysed reaction is ATP + H2O = ADP + phosphate + H(+). Functionally, ATP-dependent RNA helicase which is a subunit of the eIF4F complex involved in cap recognition and is required for mRNA binding to ribosome. In the current model of translation initiation, eIF4A unwinds RNA secondary structures in the 5'-UTR of mRNAs which is necessary to allow efficient binding of the small ribosomal subunit, and subsequent scanning for the initiator codon. The chain is ATP-dependent RNA helicase eIF4A (TIF1) from Coccidioides immitis (strain RS) (Valley fever fungus).